Here is a 673-residue protein sequence, read N- to C-terminus: UvrABC system protein B (673 aa).

Residues 26-183 (EGLEDGLAHQ…RRLAELQYTR (158 aa)) form the Helicase ATP-binding domain. 39-46 (GVTGSGKT) contacts ATP. The short motif at 92-115 (YYDYYQPEAYVPSSDTFIEKDASV) is the Beta-hairpin element. The Helicase C-terminal domain occupies 431 to 597 (QVDDLLSEIR…GLNKKVVDIL (167 aa)). One can recognise a UVR domain in the interval 633–668 (QQKIHELEGQMMQHAQNLEFEEAAQIRDQLHQLREL).

The protein belongs to the UvrB family. In terms of assembly, forms a heterotetramer with UvrA during the search for lesions. Interacts with UvrC in an incision complex.

The protein resides in the cytoplasm. In terms of biological role, the UvrABC repair system catalyzes the recognition and processing of DNA lesions. A damage recognition complex composed of 2 UvrA and 2 UvrB subunits scans DNA for abnormalities. Upon binding of the UvrA(2)B(2) complex to a putative damaged site, the DNA wraps around one UvrB monomer. DNA wrap is dependent on ATP binding by UvrB and probably causes local melting of the DNA helix, facilitating insertion of UvrB beta-hairpin between the DNA strands. Then UvrB probes one DNA strand for the presence of a lesion. If a lesion is found the UvrA subunits dissociate and the UvrB-DNA preincision complex is formed. This complex is subsequently bound by UvrC and the second UvrB is released. If no lesion is found, the DNA wraps around the other UvrB subunit that will check the other stand for damage. In Salmonella agona (strain SL483), this protein is UvrABC system protein B.